The chain runs to 103 residues: Insulin (103 aa).

A signal peptide spans 1–20 (IQSLPLLALLALSGPGTSHA). 3 disulfides stabilise this stretch: cysteine 27/cysteine 89, cysteine 39/cysteine 102, and cysteine 88/cysteine 93. A propeptide spans 53–80 (DAEHPLVNGPLHGEVGDLPFQQEEFEKV) (c peptide).

This sequence belongs to the insulin family. In terms of assembly, heterodimer of a B chain and an A chain linked by two disulfide bonds.

The protein localises to the secreted. Insulin decreases blood glucose concentration. It increases cell permeability to monosaccharides, amino acids and fatty acids. It accelerates glycolysis, the pentose phosphate cycle, and glycogen synthesis in liver. The chain is Insulin (INS) from Selasphorus rufus (Rufous hummingbird).